We begin with the raw amino-acid sequence, 428 residues long: RUN domain-containing protein 3A (428 aa).

In terms of domain architecture, RUN spans 52 to 182 (DDSSEEFINF…IDFSFCLKGE (131 aa)). A coiled-coil region spans residues 237 to 314 (ESWRNKCRKM…ELQEQLTSLI (78 aa)). Residues 349–375 (HRGSFPSPEPHISLTTGSQRTERKQNG) are disordered.

Belongs to the RUNDC3 family.

The polypeptide is RUN domain-containing protein 3A (rundc3a) (Danio rerio (Zebrafish)).